The chain runs to 306 residues: 2-phospho-L-lactate transferase (306 aa).

Positions 54 and 93 each coordinate 7,8-didemethyl-8-hydroxy-5-deazariboflavin.

The protein belongs to the CofD family. Homodimer. Mg(2+) is required as a cofactor.

The catalysed reaction is (2S)-lactyl-2-diphospho-5'-guanosine + 7,8-didemethyl-8-hydroxy-5-deazariboflavin = oxidized coenzyme F420-0 + GMP + H(+). The protein operates within cofactor biosynthesis; coenzyme F420 biosynthesis. Functionally, catalyzes the transfer of the 2-phospholactate moiety from (2S)-lactyl-2-diphospho-5'-guanosine to 7,8-didemethyl-8-hydroxy-5-deazariboflavin (FO) with the formation of oxidized coenzyme F420-0 and GMP. The sequence is that of 2-phospho-L-lactate transferase from Methanothermobacter thermautotrophicus (strain ATCC 29096 / DSM 1053 / JCM 10044 / NBRC 100330 / Delta H) (Methanobacterium thermoautotrophicum).